A 98-amino-acid chain; its full sequence is MTLIHMNILMAFSMSLVGLLMYRSHLMSALLCLEGMMLSLFVLATLTILSSHFTLANMMPIILLVFAACEAAIGLALLVMVSNTYGTDYVQNLNLLQC.

The next 3 helical transmembrane spans lie at 1 to 21 (MTLI…GLLM), 29 to 49 (ALLC…LTIL), and 61 to 81 (IILL…LVMV).

This sequence belongs to the complex I subunit 4L family. In terms of assembly, core subunit of respiratory chain NADH dehydrogenase (Complex I) which is composed of 45 different subunits.

The protein resides in the mitochondrion inner membrane. The catalysed reaction is a ubiquinone + NADH + 5 H(+)(in) = a ubiquinol + NAD(+) + 4 H(+)(out). Functionally, core subunit of the mitochondrial membrane respiratory chain NADH dehydrogenase (Complex I) which catalyzes electron transfer from NADH through the respiratory chain, using ubiquinone as an electron acceptor. Part of the enzyme membrane arm which is embedded in the lipid bilayer and involved in proton translocation. This chain is NADH-ubiquinone oxidoreductase chain 4L (MT-ND4L), found in Megaptera novaeangliae (Humpback whale).